A 628-amino-acid polypeptide reads, in one-letter code: Chaperone protein HtpG (628 aa).

The a; substrate-binding stretch occupies residues 1-339 (MSNNQQTLGF…SNDLPLNVSR (339 aa)). The b stretch occupies residues 340–556 (EILQDNKTTA…NDQMTTQMAK (217 aa)). Positions 557-628 (LFAMSGQPVP…IKRVNTLLAG (72 aa)) are c.

It belongs to the heat shock protein 90 family. In terms of assembly, homodimer.

Its subcellular location is the cytoplasm. Functionally, molecular chaperone. Has ATPase activity. The chain is Chaperone protein HtpG from Actinobacillus succinogenes (strain ATCC 55618 / DSM 22257 / CCUG 43843 / 130Z).